A 231-amino-acid chain; its full sequence is N-acetylmuramate alpha-1-phosphate uridylyltransferase (231 aa).

UTP-binding positions include 11–13 (GER) and Lys23. A substrate-binding site is contributed by Asn106. Asp108 serves as a coordination point for Mg(2+). Residues Asp146 and Asp213 each contribute to the substrate site. Mg(2+) is bound at residue Asp213.

Belongs to the nucleotidyltransferase MurU family. As to quaternary structure, monomer. Mg(2+) serves as cofactor.

It catalyses the reaction N-acetyl-alpha-D-muramate 1-phosphate + UDP + H(+) = UDP-N-acetyl-alpha-D-muramate + phosphate. Its pathway is cell wall biogenesis; peptidoglycan recycling. Functionally, catalyzes the formation of UDP-N-acetylmuramate (UDP-MurNAc), a crucial precursor of the bacterial peptidoglycan cell wall, from UTP and MurNAc-alpha-1P. Is likely involved in peptidoglycan recycling as part of a cell wall recycling pathway that bypasses de novo biosynthesis of the peptidoglycan precursor UDP-MurNAc. Is able to complement the fosfomycin sensitivity phenotype of a P.putida mutant lacking murU. This chain is N-acetylmuramate alpha-1-phosphate uridylyltransferase, found in Neisseria meningitidis serogroup B (strain ATCC BAA-335 / MC58).